The primary structure comprises 313 residues: MKIGLVKANFPGERRVPLLPKDIKDFKNEILVEEGFGKFLDIDDQEYSDKGCHILSRAEVFAESEAIFSLKLIQPTDYYHLREGQMIIGWTHPFGSGQSFMKEQALPKKLIVVDLDSNSPCIYYENEIFESGIPKGLLYKNSFYAGYAGVLDALLQYGLIPTEETKIAILGSGNVAQGAFSSISKYSSNIRMYYRKTMSIFKENYTKYDIIINGIEIGKDDDPILSFSEQKSLKKGTLIIDVAADAGNTIEGSHFTSIDAPIYENAGKYYYVVPNTPSLIYRNVSQELSKILSENIFRKDCSRFIEKVKPLNK.

The pyruvate site is built by Arg15, Lys71, and His92. 171 to 176 (GSGNVA) contacts NADP(+).

Belongs to the AlaDH/PNT family. CEOS subfamily. As to quaternary structure, homotetramer.

The catalysed reaction is N(5)-[1(S)-1-carboxyethyl]-L-ornithine + NADP(+) + H2O = L-ornithine + pyruvate + NADPH + H(+). Its activity is regulated as follows. Is potently inhibited by the reaction product N(5)-(L-1-carboxyethyl)-L-ornithine. Catalyzes the NADPH-dependent reductive condensation between pyruvic acid and the side chain amino group of L-ornithine to form N(5)-(L-1-carboxyethyl)-L-ornithine. To a lesser extent, can also use L-lysine as substrate (yielding N(6)-(L-1-carboxyethyl)-L-lysine). NADH cannot replace NADPH in the condensation reaction. The protein is N(5)-(carboxyethyl)ornithine synthase (ceo) of Lactococcus lactis subsp. lactis (Streptococcus lactis).